Reading from the N-terminus, the 762-residue chain is Proline-rich receptor-like protein kinase PERK10 (762 aa).

A disordered region spans residues 1–322; it reads MTTPAQAPRE…PTPVTDNSSS (322 aa). At 1-328 the chain is on the extracellular side; it reads MTTPAQAPRE…NSSSSGISIA (328 aa). The span at 13–23 shows a compositional bias: low complexity; it reads SLSPSLASPPL. An N-linked (GlcNAc...) asparagine glycan is attached at Asn-37. Residues 41 to 57 are compositionally biased toward low complexity; the sequence is PTREPTNGNPPETTNTP. Composition is skewed to pro residues over residues 60 to 210, 231 to 246, and 254 to 275; these read SSPP…PSTP, PPPP…PPSP, and HPSP…PDPL. Low complexity predominate over residues 276-305; sequence PSNSSSPPTLLPPSSVVSPPSPPRKSVSGP. Asn-278 and Asn-319 each carry an N-linked (GlcNAc...) asparagine glycan. The helical transmembrane segment at 329 to 349 threads the bilayer; that stretch reads AVVGVSIGVALVLLTLIGVVV. Topologically, residues 350–762 are cytoplasmic; that stretch reads CCLKKRKKRL…NSYISKDENL (413 aa). Positions 370 to 410 are disordered; sequence TPMESSSPRSDSALLKTQSSAPLVGNRSSNRTYLSQSEPGG. Over residues 372–407 the composition is skewed to polar residues; the sequence is MESSSPRSDSALLKTQSSAPLVGNRSSNRTYLSQSE. The 277-residue stretch at 430–706 folds into the Protein kinase domain; that stretch reads FSDENLLGEG…SQIVRAFDSL (277 aa). Residues 436–444 and Lys-458 each bind ATP; that span reads LGEGGFGRV. Residue Asp-554 is the Proton acceptor of the active site.

This sequence belongs to the protein kinase superfamily. Ser/Thr protein kinase family. In terms of assembly, interacts with KIPK1 and KIPK2 (via its cytosolic domain). As to expression, mostly expressed in inflorescence bolts and flower buds, and, to a lower extent, in roots, seedlings, leaves and siliques.

It is found in the cell membrane. It carries out the reaction L-seryl-[protein] + ATP = O-phospho-L-seryl-[protein] + ADP + H(+). The catalysed reaction is L-threonyl-[protein] + ATP = O-phospho-L-threonyl-[protein] + ADP + H(+). In terms of biological role, could be involved in the negative regulation of root growth. The chain is Proline-rich receptor-like protein kinase PERK10 (PERK10) from Arabidopsis thaliana (Mouse-ear cress).